A 432-amino-acid polypeptide reads, in one-letter code: Sphingosine N-acyltransferase-like protein ALT7 (432 aa).

The chain crosses the membrane as a helical span at residues 55–75 (IGLSLGSLLLLILMFTCLPYY). N-linked (GlcNAc...) asparagine glycosylation occurs at asparagine 77. The next 7 membrane-spanning stretches (helical) occupy residues 91-111 (FIFS…IYLL), 128-148 (FTEQ…GMYI), 172-192 (GLTK…IVVV), 226-246 (VGNV…FAKL), 250-270 (LGFQ…WLVA), 273-293 (GLYL…MPYG), and 338-358 (AFLG…GMIL). One can recognise a TLC domain in the interval 123-366 (KLMVRFTEQG…ILKVAYKVFQ (244 aa)). Residues 370–395 (ADDTRSDSEESGYGTSDHEGDCYGAQ) form a disordered region.

This sequence belongs to the sphingosine N-acyltransferase family.

It is found in the membrane. It functions in the pathway mycotoxin biosynthesis. Its function is as follows. Sphingosine N-acyltransferase-like protein; part of the gene cluster that mediates the biosynthesis of the host-selective toxins (HSTs) AAL-toxins, sphinganine-analog mycotoxins responsible for Alternaria stem canker on tomato by the tomato pathotype. The biosynthesis starts with the polyketide synthase ALT1-catalyzed C-16 carbon chain assembly from one starter acetyl-CoA unit with malonyl-CoA extender units. ALT1 also selectively transfers methyl groups at the first and the third cycle of chain elongation for AAL toxin. The C-16 polyketide chain is released from the enzyme by a nucleophilic attack of a carbanion, which is derived from R-carbon of glycin by decarboxylation, on the carbonyl carbon of polyketide acyl chain. This step is probably catalyzed by a pyridoxal 5'-phosphate-dependent aminoacyl transferase ALT4. The respective functions of the other enzymes encoded by the cluster have still to be elucidated. The sphingosine N-acyltransferase-like protein ALT7 seems not to act as a resistance/self-tolerance factor against the toxin in the toxin biosynthetic gene cluster, contrary to what is expected. The polypeptide is Sphingosine N-acyltransferase-like protein ALT7 (Alternaria alternata (Alternaria rot fungus)).